The primary structure comprises 489 residues: Lysine--tRNA ligase (489 aa).

Positions 399 and 406 each coordinate Mg(2+).

It belongs to the class-II aminoacyl-tRNA synthetase family. As to quaternary structure, homodimer. The cofactor is Mg(2+).

The protein resides in the cytoplasm. The enzyme catalyses tRNA(Lys) + L-lysine + ATP = L-lysyl-tRNA(Lys) + AMP + diphosphate. The polypeptide is Lysine--tRNA ligase (Roseiflexus sp. (strain RS-1)).